An 89-amino-acid chain; its full sequence is Large ribosomal subunit protein bL27 (89 aa).

The disordered stretch occupies residues 1–21; it reads MAHKKSGGSSSNGRDSESKRL.

The protein belongs to the bacterial ribosomal protein bL27 family.

This is Large ribosomal subunit protein bL27 from Caulobacter vibrioides (strain NA1000 / CB15N) (Caulobacter crescentus).